The primary structure comprises 2474 residues: Highly reducing polyketide synthase 40 (2474 aa).

Positions 1 to 294 (MFKETEIQQR…GSNAHIIIDD (294 aa)) constitute a Ketosynthase family 3 (KS3) domain. Active-site for beta-ketoacyl synthase activity residues include Cys42, His177, and His217. Positions 459 to 798 (FVFTGQGAQW…GYESVLRRGT (340 aa)) constitute a Malonyl-CoA:ACP transacylase (MAT) domain. Residues 864-998 (HELLGAPVPD…GLVVTEYEQP (135 aa)) are N-terminal hotdog fold. The PKS/mFAS DH domain maps to 864–1182 (HELLGAPVPD…ITTVARSEGA (319 aa)). His896 acts as the Proton acceptor; for dehydratase activity in catalysis. The C-terminal hotdog fold stretch occupies residues 1027-1182 (KVETSFRQLY…ITTVARSEGA (156 aa)). Asp1093 functions as the Proton donor; for dehydratase activity in the catalytic mechanism. Residues 1232-1535 (VEMMCFLYIK…DLHIYDFPDH (304 aa)) are methyltransferase (CMet) domain. The Enoyl reductase (ER) domain occupies 1770–2063 (GLLDSLQFQD…SGSHMGKLVL (294 aa)). Positions 2087–2263 (ASYLLSGGLG…PGVAVDLGMI (177 aa)) constitute a Ketoreductase (KR) domain. In terms of domain architecture, Carrier spans 2385–2462 (DAAKIVSAAI…ELAELAAKRS (78 aa)). Ser2422 bears the O-(pantetheine 4'-phosphoryl)serine mark.

Requires pantetheine 4'-phosphate as cofactor.

Its pathway is secondary metabolite biosynthesis. Highly reducing polyketide synthase; part of the gene cluster that mediates the biosynthesis of the gamma-pyrones fusapyrone (FPY) and deoxyfusapyrone (dFPY). FPY is an undecaketide and thus likely synthesized by the polyketide synthase FPY1 from acetyl-CoA functioning as starter unit and the addition of 10 malonyl-CoA extender units by successive Claisen-condensations. Next to this, FPY shares some rare features: C-glycosylated 4-deoxyglucose at C-3, a gem-dimethyl group at C-13, and an alpha-beta to beta-gamma double bond shift at C-20. During FPY biosynthesis mono-C-methyl groups are transferred to the tetra-, penta-, hexa- and heptaketide, while two C-methyl groups are transferred to the nonaketide, suggesting that the CMet domain is programmed to selectively catalyze two successive C-alpha-methylation reactions of the nonaketide, while other alpha-carbons are non- or mono-methylated only. While the origin of the 4'-deoxyglucose moiety remains opaque, its transfer to C-3 is most likely mediated by the C-glycosyltransferase FPY2. Next to this, the hydroxyl group present at C-33 and discriminating between FPY and dFPY, is likely to be installed by the cytochrome P450 monooxygenase FPY7. No putative function can be predicted for the remaining genes FPY3-FPY6. This Fusarium mangiferae (Mango malformation disease fungus) protein is Highly reducing polyketide synthase 40.